Consider the following 616-residue polypeptide: Sialic acid TRAP transporter permease protein SiaT (616 aa).

The TRAP transporter small permease stretch occupies residues 1-190; it reads MKYINKLEEW…RISNYIKLGS (190 aa). The next 17 membrane-spanning stretches (helical) occupy residues 9–29, 36–56, 83–103, 117–137, 153–173, 195–215, 244–264, 288–308, 332–352, 357–377, 407–427, 431–451, 459–479, 505–525, 527–547, 552–572, and 587–607; these read EWLG…QILS, PLIW…MLGI, TNTF…HFGI, GGIS…LMMF, YLPA…LFFA, IALL…WSLF, FPLL…TGGI, IGAS…AGGL, ASCI…YGVI, IAKL…ALMA, FWAI…LFSP, AIVA…ELTL, IEAM…TFFG, VLVM…ALAL, FLVL…LIFF, TLNM…FVVA, and LPFL…PQII. Residues 191–616 are TRAP transporter large permease; sequence SSVYIALLVW…ITFVPNLLIP (426 aa).

In the N-terminal section; belongs to the TRAP transporter small permease family. This sequence in the C-terminal section; belongs to the TRAP transporter large permease family. The complex comprises the extracytoplasmic solute receptor protein SiaP, and the fused transmembrane protein SiaT.

It localises to the cell inner membrane. Its function is as follows. Part of the tripartite ATP-independent periplasmic (TRAP) transport system SiaPT involved in the uptake of sialic acid. This Haemophilus influenzae (strain 86-028NP) protein is Sialic acid TRAP transporter permease protein SiaT (siaT).